The primary structure comprises 920 residues: Plasma membrane ATPase (920 aa).

A disordered region spans residues 1-77; that stretch reads MADHSASGAP…TPGGGRVVPE (77 aa). Residues 1–115 are Cytoplasmic-facing; that stretch reads MADHSASGAP…KEEKENHFLK (115 aa). Acidic residues predominate over residues 38–51; that stretch reads EDDEDEDIDALIED. A helical membrane pass occupies residues 116–138; the sequence is FLGFFVGPIQFVMEGAAVLAAGL. The Extracellular portion of the chain corresponds to 139–140; it reads ED. A helical transmembrane segment spans residues 141–160; it reads WVDFGVICGLLLLNAVVGFV. Residues 161–291 lie on the Cytoplasmic side of the membrane; that stretch reads QEFQAGSIVD…GSGHFTEVLN (131 aa). Residues 292–314 form a helical membrane-spanning segment; sequence GIGTILLILVIFTLLIVWVSSFY. Residues 315 to 321 lie on the Extracellular side of the membrane; sequence RSNPIVQ. Residues 322–354 traverse the membrane as a helical segment; that stretch reads ILEFTLAITIIGVPVGLPAVVTTTMAVGAAYLA. The Cytoplasmic segment spans residues 355-687; the sequence is KKKAIVQKLS…LKTSRQIFHR (333 aa). Aspartate 378 functions as the 4-aspartylphosphate intermediate in the catalytic mechanism. The Mg(2+) site is built by aspartate 634 and aspartate 638. The helical transmembrane segment at 688 to 713 threads the bilayer; that stretch reads MYAYVVYRIALSIHLEIFLGLWIAIL. At 714-720 the chain is on the extracellular side; sequence NRSLNIE. A helical membrane pass occupies residues 721–738; sequence LVVFIAIFADVATLAIAY. Over 739-754 the chain is Cytoplasmic; that stretch reads DNAPYSQTPVKWNLPK. Residues 755-779 form a helical membrane-spanning segment; sequence LWGMSVLLGVVLAVGTWITVTTMYA. Over 780 to 806 the chain is Extracellular; it reads QGENGGIVQNFGNMDEVLFLQISLTEN. 2 consecutive transmembrane segments (helical) span residues 807–826 and 827–847; these read WLIFITRANGPFWSSIPSWQ and LSGAIFLVDILATCFTIWGWF. The Extracellular segment spans residues 848–853; it reads EHSDTS. A helical membrane pass occupies residues 854–878; sequence IVAVVRIWIFSFGIFCIMGGVYYIL. The Cytoplasmic segment spans residues 879-920; it reads QDSVGFDNLMHGKSPKGNQKQRSLEDFVVSLQRVSTQHEKSQ.

This sequence belongs to the cation transport ATPase (P-type) (TC 3.A.3) family. Type IIIA subfamily.

The protein resides in the cell membrane. The catalysed reaction is ATP + H2O + H(+)(in) = ADP + phosphate + 2 H(+)(out). The plasma membrane ATPase of plants and fungi is a hydrogen ion pump. The proton gradient it generates drives the active transport of nutrients by H(+)-symport. The resulting external acidification and/or internal alkinization may mediate growth responses. The chain is Plasma membrane ATPase (pma-1) from Neurospora crassa (strain ATCC 24698 / 74-OR23-1A / CBS 708.71 / DSM 1257 / FGSC 987).